We begin with the raw amino-acid sequence, 237 residues long: Large ribosomal subunit protein uL1 (237 aa).

The protein belongs to the universal ribosomal protein uL1 family. As to quaternary structure, part of the 50S ribosomal subunit.

In terms of biological role, binds directly to 23S rRNA. The L1 stalk is quite mobile in the ribosome, and is involved in E site tRNA release. Functionally, protein L1 is also a translational repressor protein, it controls the translation of the L11 operon by binding to its mRNA. The chain is Large ribosomal subunit protein uL1 from Thermosynechococcus vestitus (strain NIES-2133 / IAM M-273 / BP-1).